The sequence spans 652 residues: Regulator of DNA class I crossover intermediates 1 (652 aa).

The binds DNA containing a D-loop DNA-binding region spans 1 to 231 (MNWVGGSRSR…TLFERLNSLG (231 aa)). Disordered stretches follow at residues 363-434 (NKTS…NIPS) and 469-506 (KISL…EDQI). Basic and acidic residues predominate over residues 377–388 (YQREYNKNERND). Positions 389–401 (LSTSFENDYYPSS) are enriched in polar residues. Basic and acidic residues predominate over residues 402–417 (SERKEKFENDYQEKTP). Residues 473–498 (DSAQSSRSTSYSPRPTDSCFSSSSDL) are compositionally biased toward low complexity.

Interacts with MSH5. Interacts with TEX11.

The protein resides in the chromosome. Involved in recombination, probably acting by stabilizing recombination intermediates during meiotic crossover formation. Required for normal germline development and fertility. Required for meiotic progression, complete chromosomal synapsis and crossover formation. Binds double-stranded DNA. However, also binds branched DNA molecules, such as those containing a D-loop or Holliday junction structure. Probably not required for formation of DNA double-strand breaks (DSBs). Also binds RNA in an RNA structure-independent manner, with a preference for binding 3'-UTR regions of mRNAs; may stabilize bound RNAs. The protein is Regulator of DNA class I crossover intermediates 1 of Homo sapiens (Human).